The primary structure comprises 255 residues: EEF1A lysine methyltransferase 4 (255 aa).

S-adenosyl-L-methionine is bound by residues Trp26 and Tyr30. Tyr39 carries the post-translational modification Phosphotyrosine. Residues Trp41, Gly66, 88–89 (DY), 113–114 (DV), and Lys130 contribute to the S-adenosyl-L-methionine site. A Required for methyltransferase activity motif is present at residues 129-134 (EKGTLD).

This sequence belongs to the methyltransferase superfamily.

The enzyme catalyses L-lysyl-[protein] + S-adenosyl-L-methionine = N(6)-methyl-L-lysyl-[protein] + S-adenosyl-L-homocysteine + H(+). It carries out the reaction N(6)-methyl-L-lysyl-[protein] + S-adenosyl-L-methionine = N(6),N(6)-dimethyl-L-lysyl-[protein] + S-adenosyl-L-homocysteine + H(+). The catalysed reaction is N(6),N(6)-dimethyl-L-lysyl-[protein] + S-adenosyl-L-methionine = N(6),N(6),N(6)-trimethyl-L-lysyl-[protein] + S-adenosyl-L-homocysteine + H(+). In terms of biological role, protein-lysine methyltransferase that efficiently catalyzes three successive methylations on 'Lys-36' in eukaryotic translation elongation factor 1 alpha (EEF1A1 or EEF1A2). The chain is EEF1A lysine methyltransferase 4 from Mus musculus (Mouse).